Here is a 345-residue protein sequence, read N- to C-terminus: S-adenosylmethionine:tRNA ribosyltransferase-isomerase (345 aa).

The protein belongs to the QueA family. In terms of assembly, monomer.

It is found in the cytoplasm. It catalyses the reaction 7-aminomethyl-7-carbaguanosine(34) in tRNA + S-adenosyl-L-methionine = epoxyqueuosine(34) in tRNA + adenine + L-methionine + 2 H(+). It functions in the pathway tRNA modification; tRNA-queuosine biosynthesis. Its function is as follows. Transfers and isomerizes the ribose moiety from AdoMet to the 7-aminomethyl group of 7-deazaguanine (preQ1-tRNA) to give epoxyqueuosine (oQ-tRNA). In Helicobacter pylori (strain HPAG1), this protein is S-adenosylmethionine:tRNA ribosyltransferase-isomerase.